Here is a 355-residue protein sequence, read N- to C-terminus: Elongation factor Ts, mitochondrial (355 aa).

Residues 1–46 constitute a mitochondrion transit peptide; sequence MIRSLNFALRNCNKNILINSNKITINNGLLLKKNNFCTQSTSEVKV.

Belongs to the EF-Ts family.

It localises to the mitochondrion. In terms of biological role, associates with the EF-Tu.GDP complex and induces the exchange of GDP to GTP. It remains bound to the aminoacyl-tRNA.EF-Tu.GTP complex up to the GTP hydrolysis stage on the ribosome. This chain is Elongation factor Ts, mitochondrial (tsfm), found in Dictyostelium discoideum (Social amoeba).